A 418-amino-acid chain; its full sequence is Cell division protein FtsZ (418 aa).

GTP-binding positions include 27 to 31, 114 to 116, Glu145, Lys149, and Asp193; these read GGGSN and GTG. Residues 386–418 are disordered; sequence KNGVKGHTFGVPLPSVNEDLDEPTFLRNRNKGL.

This sequence belongs to the FtsZ family. In terms of assembly, homodimer. Polymerizes to form a dynamic ring structure in a strictly GTP-dependent manner. Interacts directly with several other division proteins.

The protein resides in the cytoplasm. Essential cell division protein that forms a contractile ring structure (Z ring) at the future cell division site. The regulation of the ring assembly controls the timing and the location of cell division. One of the functions of the FtsZ ring is to recruit other cell division proteins to the septum to produce a new cell wall between the dividing cells. Binds GTP and shows GTPase activity. This Treponema pallidum (strain Nichols) protein is Cell division protein FtsZ.